The sequence spans 379 residues: Junctional adhesion molecule-like (379 aa).

Residues 1 to 20 (MLCLLKLIVIPVILAPVGYP) form the signal peptide. Topologically, residues 21–281 (QGLPGLTVSS…QQGILNGNQL (261 aa)) are extracellular. Ig-like V-type domains are found at residues 24-135 (PGLT…KPVE) and 140-250 (PEEP…KTIV). Residues cysteine 45 and cysteine 119 are joined by a disulfide bond. N-linked (GlcNAc...) asparagine glycans are attached at residues asparagine 79, asparagine 89, and asparagine 125. Residues cysteine 158 and cysteine 236 are joined by a disulfide bond. Residues 282-302 (VIIVGIVCATFLLLPVLILIV) traverse the membrane as a helical segment. Topologically, residues 303–379 (KKAKWNKSSV…SLVRSSVRSK (77 aa)) are cytoplasmic. Tyrosine 355 is subject to Phosphotyrosine.

This sequence belongs to the immunoglobulin superfamily. As to quaternary structure, homodimer; active form in leukocyte-endothelial cell adhesion. Interacts (homodimeric form) with CXADR. Interacts (via cytoplasmic domain) with the PI3 kinase; upon CXADR-binding. Interacts with ITGA4 and ITGB1; integrin alpha-4/beta-1 may regulate leukocyte to endothelial cells adhesion by controlling JAML homodimerization. Expressed by gamma-delta intraepithelial T cells (at protein level).

It is found in the cell membrane. Its subcellular location is the cell junction. Transmembrane protein of the plasma membrane of leukocytes that control their migration and activation through interaction with CXADR, a plasma membrane receptor found on adjacent epithelial and endothelial cells. The interaction between both receptors mediates the activation of gamma-delta T-cells, a subpopulation of T-cells residing in epithelia and involved in tissue homeostasis and repair. Upon epithelial CXADR-binding, JAML induces downstream cell signaling events in gamma-delta T-cells through PI3-kinase and MAP kinases. It results in proliferation and production of cytokines and growth factors by T-cells that in turn stimulate epithelial tissues repair. It also controls the transmigration of leukocytes within epithelial and endothelial tissues through adhesive interactions with epithelial and endothelial CXADR. The polypeptide is Junctional adhesion molecule-like (Mus musculus (Mouse)).